Reading from the N-terminus, the 122-residue chain is Small ribosomal subunit protein uS13 (122 aa).

Residues 96-122 (PVRGQRTRTNARTRKGPKKTVGVRRAK) form a disordered region.

The protein belongs to the universal ribosomal protein uS13 family. Part of the 30S ribosomal subunit. Forms a loose heterodimer with protein S19. Forms two bridges to the 50S subunit in the 70S ribosome.

In terms of biological role, located at the top of the head of the 30S subunit, it contacts several helices of the 16S rRNA. In the 70S ribosome it contacts the 23S rRNA (bridge B1a) and protein L5 of the 50S subunit (bridge B1b), connecting the 2 subunits; these bridges are implicated in subunit movement. Contacts the tRNAs in the A and P-sites. This chain is Small ribosomal subunit protein uS13, found in Halothermothrix orenii (strain H 168 / OCM 544 / DSM 9562).